The chain runs to 256 residues: Probable aquaporin TIP-type alpha (256 aa).

The Cytoplasmic segment spans residues 1–24; that stretch reads MATRRYSFGRTDEATHPDSMRASL. The residue at position 7 (S7) is a Phosphoserine; by CPK. Residues 25-44 traverse the membrane as a helical segment; sequence AEFASTFIFVFAGEGSGLAL. At 45 to 57 the chain is on the vacuolar side; the sequence is VKIYQDSAFSAGE. A helical transmembrane segment spans residues 58–77; that stretch reads LLALALAHAFALFAAVSASM. Topologically, residues 78-102 are cytoplasmic; it reads HVSGGHVNPAVSFGALIGGRISVIR. The NPA 1 motif lies at 85–87; the sequence is NPA. Residues 103-121 form a helical membrane-spanning segment; it reads AVYYWIAQLLGSIVAALVL. At 122-143 the chain is on the vacuolar side; that stretch reads RLVTNNMRPSGFHVSPGVGVGH. Residues 144 to 164 traverse the membrane as a helical segment; sequence MFILEVVMTFGLMYTVYGTAI. Topologically, residues 165-169 are cytoplasmic; it reads DPKRG. The helical transmembrane segment at 170-189 threads the bilayer; that stretch reads AVSYIAPLAIGLIVGANILV. Topologically, residues 190 to 216 are vacuolar; that stretch reads GGPFDGACMNPALAFGPSLVGWQWHQH. An NPA 2 motif is present at residues 199 to 201; the sequence is NPA. A helical transmembrane segment spans residues 217 to 239; it reads WIFWVGPLLGAALAALVYEYAVI. The Cytoplasmic segment spans residues 240–256; the sequence is PIEPPPHHHQPLATEDY.

This sequence belongs to the MIP/aquaporin (TC 1.A.8) family. TIP (TC 1.A.8.10) subfamily. Phosphorylated by a tonoplast-bound calcium-dependent protein kinase. Found in all seed tissues that are alive at seed maturity, but not in tissues that lose viability during seed maturation.

It is found in the vacuole membrane. In terms of biological role, channel protein in tonoplast. These proteins may allow the diffusion of amino acids and/or peptides from the vacuolar compartment to the cytoplasm. In Phaseolus vulgaris (Kidney bean), this protein is Probable aquaporin TIP-type alpha.